The sequence spans 187 residues: Protein GrpE (187 aa).

The segment covering M1–E17 has biased composition (low complexity). The interval M1 to E27 is disordered.

The protein belongs to the GrpE family. As to quaternary structure, homodimer.

It is found in the cytoplasm. Participates actively in the response to hyperosmotic and heat shock by preventing the aggregation of stress-denatured proteins, in association with DnaK and GrpE. It is the nucleotide exchange factor for DnaK and may function as a thermosensor. Unfolded proteins bind initially to DnaJ; upon interaction with the DnaJ-bound protein, DnaK hydrolyzes its bound ATP, resulting in the formation of a stable complex. GrpE releases ADP from DnaK; ATP binding to DnaK triggers the release of the substrate protein, thus completing the reaction cycle. Several rounds of ATP-dependent interactions between DnaJ, DnaK and GrpE are required for fully efficient folding. The chain is Protein GrpE from Thioalkalivibrio sulfidiphilus (strain HL-EbGR7).